Consider the following 354-residue polypeptide: Nicotinate-nucleotide--dimethylbenzimidazole phosphoribosyltransferase (354 aa).

Glu-319 acts as the Proton acceptor in catalysis.

It belongs to the CobT family.

The enzyme catalyses 5,6-dimethylbenzimidazole + nicotinate beta-D-ribonucleotide = alpha-ribazole 5'-phosphate + nicotinate + H(+). It participates in nucleoside biosynthesis; alpha-ribazole biosynthesis; alpha-ribazole from 5,6-dimethylbenzimidazole: step 1/2. Catalyzes the synthesis of alpha-ribazole-5'-phosphate from nicotinate mononucleotide (NAMN) and 5,6-dimethylbenzimidazole (DMB). The protein is Nicotinate-nucleotide--dimethylbenzimidazole phosphoribosyltransferase of Chlorobium chlorochromatii (strain CaD3).